Consider the following 429-residue polypeptide: Enolase 1 (429 aa).

Q163 contacts (2R)-2-phosphoglycerate. E205 (proton donor) is an active-site residue. Residues D242, E287, and D314 each contribute to the Mg(2+) site. (2R)-2-phosphoglycerate-binding residues include K339, R368, S369, and K390. K339 serves as the catalytic Proton acceptor.

The protein belongs to the enolase family. Requires Mg(2+) as cofactor.

The protein resides in the cytoplasm. It localises to the secreted. The protein localises to the cell surface. It catalyses the reaction (2R)-2-phosphoglycerate = phosphoenolpyruvate + H2O. It participates in carbohydrate degradation; glycolysis; pyruvate from D-glyceraldehyde 3-phosphate: step 4/5. Catalyzes the reversible conversion of 2-phosphoglycerate (2-PG) into phosphoenolpyruvate (PEP). It is essential for the degradation of carbohydrates via glycolysis. The polypeptide is Enolase 1 (Cupriavidus metallidurans (strain ATCC 43123 / DSM 2839 / NBRC 102507 / CH34) (Ralstonia metallidurans)).